Here is a 1684-residue protein sequence, read N- to C-terminus: A-kinase anchor protein 12 (1684 aa).

The disordered stretch occupies residues 1–124 (MGAGSSTEQR…DITKDEQEET (124 aa)). The N-myristoyl glycine moiety is linked to residue G2. S11, S18, S22, and S27 each carry phosphoserine. Low complexity predominate over residues 30–48 (GPAAEASGAAGDPADADPA). Acidic residues predominate over residues 75-86 (ESQDGQEEEVTV). A compositionally biased stretch (basic and acidic residues) spans 89 to 105 (VGQRESEDVKEKDRAKE). At S136 the chain carries Phosphoserine. Disordered stretches follow at residues 175–281 (SDTV…ETTS) and 296–353 (KKTS…SADY). The span at 212–227 (ASKESELKQSTEKQEG) shows a compositional bias: basic and acidic residues. Residues 228–247 (TLKQAQSSTEIPLQAESGQG) are compositionally biased toward polar residues. Phosphoserine occurs at positions 234 and 244. Positions 251 to 266 (EAAKDGEENREKEPTK) are enriched in basic and acidic residues. The interval 253-543 (AKDGEENREK…QHIQTESPES (291 aa)) is involved in PKC-binding. Phosphoserine occurs at positions 270 and 273. Over residues 270–281 (SPTSPVSNETTS) the composition is skewed to polar residues. Residues 302 to 320 (KPKEDDLETSEKRKEQEAE) are compositionally biased toward basic and acidic residues. The segment covering 321–342 (KVDEEEGEKTEPAPAEEQEPAE) has biased composition (acidic residues). T330 is subject to Phosphothreonine. Phosphoserine is present on S350. Y353 is subject to Phosphotyrosine. Phosphoserine occurs at positions 371 and 467. The interval 421-479 (GSGESLPPEKLAETQEVPQEAEPVEELMKTKEVCVSGGDHTQLTDLSPEEKMLPKHPEG) is disordered. The segment covering 468–478 (PEEKMLPKHPE) has biased composition (basic and acidic residues). Phosphoserine occurs at positions 489, 505, and 507. The disordered stretch occupies residues 492–825 (RIKVQGSPLK…INEDDPDVPA (334 aa)). Low complexity predominate over residues 497–511 (GSPLKKLFSSSGLKK). Residues 512-521 (LSGKKQKGKR) show a composition bias toward basic residues. S540, S543, S584, S598, S613, and S615 each carry phosphoserine. Residues 593–613 (ITPWASFKKMVTPKKRVRRPS) carry the AKAP CaM-binding 1 motif. The span at 611 to 625 (RPSESDKEEELDKVK) shows a compositional bias: basic and acidic residues. Residues 626–637 (SATLSSTESTAS) show a composition bias toward low complexity. A Phosphothreonine modification is found at T628. S630, S631, S634, and S637 each carry phosphoserine. Basic and acidic residues predominate over residues 641 to 660 (DEVRAVGEEQRSEEPKRRVD). 3 positions are modified to phosphoserine: S682, S683, and S684. A compositionally biased stretch (basic and acidic residues) spans 696-710 (DGHRAEEASKDKEAD). Residues 714–723 (ASTQEQDQAH) show a composition bias toward polar residues. The segment covering 724 to 741 (GSSSPEPAGSPSEGEGVS) has biased composition (low complexity). Phosphoserine occurs at positions 733, 745, 767, and 786. An AKAP CaM-binding 2 motif is present at residues 740-760 (VSTWESFKRLVTPRKKSKSKL). The short motif at 781 to 801 (EESWVSIKKFIPGRRKKRADG) is the AKAP CaM-binding 3 element. T871 carries the post-translational modification Phosphothreonine. Residue S873 is modified to Phosphoserine. Positions 970-1001 (TEASGAEETTDMVSAVSQLSDSPDTTEEATPV) are disordered. Over residues 980 to 992 (DMVSAVSQLSDSP) the composition is skewed to polar residues. K1030 is covalently cross-linked (Glycyl lysine isopeptide (Lys-Gly) (interchain with G-Cter in SUMO1)). Disordered regions lie at residues 1055 to 1106 (VEED…VTED), 1121 to 1211 (LMEQ…DVLE), 1232 to 1365 (EGEA…DKAD), and 1391 to 1492 (TVAT…REKI). S1059 bears the Phosphoserine mark. The segment covering 1130 to 1176 (SSETLTDSETNGSTPLADSDTPNGTQQDETVDSQDSNAIAAVKQSQV) has biased composition (polar residues). Composition is skewed to basic and acidic residues over residues 1198–1210 (QEEH…RDVL) and 1239–1254 (DGEK…ELEV). S1292 bears the Phosphoserine mark. Over residues 1293-1331 (PEKREMGTDVEKEETETKTEQASEEHEQETAAPEHEGTH) the composition is skewed to basic and acidic residues. Residues S1351, S1355, and S1357 each carry the phosphoserine modification. Over residues 1467–1492 (QRSDEDNKPDAGPDAAGKESAAREKI) the composition is skewed to basic and acidic residues. The tract at residues 1501 to 1514 (ELESKSNKIVQSVI) is RII-binding. S1546 and S1645 each carry phosphoserine. A disordered region spans residues 1568–1684 (TLSAVAQEGL…QEPKGDLTES (117 aa)). Basic and acidic residues predominate over residues 1653–1684 (LTEEGDALKEEMNKAQTEEDDLQEPKGDLTES).

In terms of assembly, binds to dimeric RII-alpha regulatory subunit of PKC. As to expression, isoform 1 is predominantly found in the nervous system. Isoform 3 is testis specific.

Its subcellular location is the cytoplasm. It is found in the cytoskeleton. It localises to the membrane. In terms of biological role, anchoring protein that mediates the subcellular compartmentation of protein kinase A (PKA) and protein kinase C (PKC). In Mus musculus (Mouse), this protein is A-kinase anchor protein 12 (Akap12).